The sequence spans 453 residues: tRNA-2-methylthio-N(6)-dimethylallyladenosine synthase (453 aa).

One can recognise an MTTase N-terminal domain in the interval 7–123 (GTYWITTFGC…LDTLLSQVEA (117 aa)). [4Fe-4S] cluster contacts are provided by Cys-16, Cys-52, Cys-86, Cys-158, Cys-162, and Cys-165. The Radical SAM core domain occupies 144-381 (RDSSLCAWVN…NALVERKAKA (238 aa)). A TRAM domain is found at 384–447 (QRYLGRVEEV…AFSLSGSAQA (64 aa)).

The protein belongs to the methylthiotransferase family. MiaB subfamily. Monomer. It depends on [4Fe-4S] cluster as a cofactor.

The protein resides in the cytoplasm. It catalyses the reaction N(6)-dimethylallyladenosine(37) in tRNA + (sulfur carrier)-SH + AH2 + 2 S-adenosyl-L-methionine = 2-methylsulfanyl-N(6)-dimethylallyladenosine(37) in tRNA + (sulfur carrier)-H + 5'-deoxyadenosine + L-methionine + A + S-adenosyl-L-homocysteine + 2 H(+). Functionally, catalyzes the methylthiolation of N6-(dimethylallyl)adenosine (i(6)A), leading to the formation of 2-methylthio-N6-(dimethylallyl)adenosine (ms(2)i(6)A) at position 37 in tRNAs that read codons beginning with uridine. The sequence is that of tRNA-2-methylthio-N(6)-dimethylallyladenosine synthase from Synechococcus sp. (strain RCC307).